The primary structure comprises 209 residues: Large ribosomal subunit protein uL3 (209 aa).

The protein belongs to the universal ribosomal protein uL3 family. As to quaternary structure, part of the 50S ribosomal subunit. Forms a cluster with proteins L14 and L19.

Functionally, one of the primary rRNA binding proteins, it binds directly near the 3'-end of the 23S rRNA, where it nucleates assembly of the 50S subunit. The polypeptide is Large ribosomal subunit protein uL3 (Clostridium tetani (strain Massachusetts / E88)).